Consider the following 507-residue polypeptide: Maturase K (507 aa).

It belongs to the intron maturase 2 family. MatK subfamily.

The protein resides in the plastid. It localises to the chloroplast. Usually encoded in the trnK tRNA gene intron. Probably assists in splicing its own and other chloroplast group II introns. This chain is Maturase K, found in Robinia pseudoacacia (Black locust).